The chain runs to 207 residues: uncharacterized protein (207 aa).

Active-site charge relay system residues include Ser-119 and His-160.

The protein belongs to the peptidase S51 family.

This is an uncharacterized protein from Pasteurella multocida (strain Pm70).